A 206-amino-acid polypeptide reads, in one-letter code: Proteasome subunit beta 2 (206 aa).

Residues 1 to 7 (MREAVSK) constitute a propeptide, removed in mature form; by autocatalysis. T8 serves as the catalytic Nucleophile.

Belongs to the peptidase T1B family. In terms of assembly, the 20S proteasome core is composed of 14 alpha and 14 beta subunits that assemble into four stacked heptameric rings, resulting in a barrel-shaped structure. The two inner rings, each composed of seven catalytic beta subunits, are sandwiched by two outer rings, each composed of seven alpha subunits. The catalytic chamber with the active sites is on the inside of the barrel. Has a gated structure, the ends of the cylinder being occluded by the N-termini of the alpha-subunits. Is capped at one or both ends by the proteasome regulatory ATPase, PAN.

It is found in the cytoplasm. It catalyses the reaction Cleavage of peptide bonds with very broad specificity.. With respect to regulation, the formation of the proteasomal ATPase PAN-20S proteasome complex, via the docking of the C-termini of PAN into the intersubunit pockets in the alpha-rings, triggers opening of the gate for substrate entry. Interconversion between the open-gate and close-gate conformations leads to a dynamic regulation of the 20S proteasome proteolysis activity. In terms of biological role, component of the proteasome core, a large protease complex with broad specificity involved in protein degradation. The sequence is that of Proteasome subunit beta 2 from Desulfurococcus amylolyticus (strain DSM 18924 / JCM 16383 / VKM B-2413 / 1221n) (Desulfurococcus kamchatkensis).